A 120-amino-acid chain; its full sequence is Large ribosomal subunit protein uL18 (120 aa).

This sequence belongs to the universal ribosomal protein uL18 family. Part of the 50S ribosomal subunit; part of the 5S rRNA/L5/L18/L25 subcomplex. Contacts the 5S and 23S rRNAs.

In terms of biological role, this is one of the proteins that bind and probably mediate the attachment of the 5S RNA into the large ribosomal subunit, where it forms part of the central protuberance. This is Large ribosomal subunit protein uL18 from Staphylococcus epidermidis (strain ATCC 35984 / DSM 28319 / BCRC 17069 / CCUG 31568 / BM 3577 / RP62A).